The primary structure comprises 715 residues: Fatty acid oxidation complex subunit alpha (715 aa).

An enoyl-CoA hydratase region spans residues 1–190 (MTTTSAFMLN…KAGLVDDVVP (190 aa)). The interval 306–714 (GPLNSVGILG…FWTNGETDQG (409 aa)) is 3-hydroxyacyl-CoA dehydrogenase.

This sequence in the N-terminal section; belongs to the enoyl-CoA hydratase/isomerase family. In the central section; belongs to the 3-hydroxyacyl-CoA dehydrogenase family. In terms of assembly, heterotetramer of two alpha chains (FadJ) and two beta chains (FadI).

It is found in the cytoplasm. It carries out the reaction a (3S)-3-hydroxyacyl-CoA = a (2E)-enoyl-CoA + H2O. It catalyses the reaction a 4-saturated-(3S)-3-hydroxyacyl-CoA = a (3E)-enoyl-CoA + H2O. The catalysed reaction is a (3S)-3-hydroxyacyl-CoA + NAD(+) = a 3-oxoacyl-CoA + NADH + H(+). The enzyme catalyses (3S)-3-hydroxybutanoyl-CoA = (3R)-3-hydroxybutanoyl-CoA. Its pathway is lipid metabolism; fatty acid beta-oxidation. Catalyzes the formation of a hydroxyacyl-CoA by addition of water on enoyl-CoA. Also exhibits 3-hydroxyacyl-CoA epimerase and 3-hydroxyacyl-CoA dehydrogenase activities. This is Fatty acid oxidation complex subunit alpha from Salmonella choleraesuis (strain SC-B67).